We begin with the raw amino-acid sequence, 140 residues long: MSSMTQNLREVMKVMFKVPGFDRVLEKVTLVSAAPEKLICEMKVEEQHTNKLGTLHGGLTATLVDSISTMALMCTERGAPGVSVDMNITYMSPAKIGEEIVITAHILKQGKTLAFASVDLTNKTTGKLIAQGRHTKHLGN.

Position 1 is an N-acetylmethionine (methionine 1). An N6-acetyllysine mark is found at lysine 27, lysine 37, and lysine 43. Residue glutamate 46 participates in CoA binding. The substrate site is built by asparagine 50 and glycine 81. CoA is bound by residues serine 83, 90-95 (YMSPAK), and 108-113 (KQGKTL). N6-acetyllysine occurs at positions 108 and 127. Histidine 137 contacts CoA.

The protein belongs to the thioesterase PaaI family. Homotetramer. Interacts with PCTP. Highly expressed in the kidney and moderately in the heart, liver, brain, small and large intestine. Also expressed in brown adipose tissue.

Its subcellular location is the cytoplasm. It is found in the cytosol. The protein localises to the mitochondrion. The protein resides in the nucleus. It localises to the cytoskeleton. Its subcellular location is the spindle. The catalysed reaction is a fatty acyl-CoA + H2O = a fatty acid + CoA + H(+). It carries out the reaction decanoyl-CoA + H2O = decanoate + CoA + H(+). The enzyme catalyses octanoyl-CoA + H2O = octanoate + CoA + H(+). It catalyses the reaction butanoyl-CoA + H2O = butanoate + CoA + H(+). The catalysed reaction is hexanoyl-CoA + H2O = hexanoate + CoA + H(+). It carries out the reaction tetradecanoyl-CoA + H2O = tetradecanoate + CoA + H(+). The enzyme catalyses hexadecanoyl-CoA + H2O = hexadecanoate + CoA + H(+). It catalyses the reaction dodecanoyl-CoA + H2O = dodecanoate + CoA + H(+). The catalysed reaction is (9Z)-octadecenoyl-CoA + H2O = (9Z)-octadecenoate + CoA + H(+). Functionally, catalyzes the hydrolysis of acyl-CoAs into free fatty acids and coenzyme A (CoASH), regulating their respective intracellular levels. Has acyl-CoA thioesterase activity towards medium (C12) and long-chain (C18) fatty acyl-CoA substrates. Can also hydrolyze 3-hydroxyphenylacetyl-CoA and 3,4-dihydroxyphenylacetyl-CoA (in vitro). May play a role in controlling adaptive thermogenesis. This chain is Acyl-coenzyme A thioesterase 13, found in Mus musculus (Mouse).